A 561-amino-acid chain; its full sequence is Lipase maturation factor 1 (561 aa).

The tract at residues 1–32 (MAAPRESLRRRKAGAGDPEPEAPPGQGRDLKG) is disordered. Residues 1 to 42 (MAAPRESLRRRKAGAGDPEPEAPPGQGRDLKGRPARLRAGTF) lie on the Cytoplasmic side of the membrane. A helical transmembrane segment spans residues 43–65 (WLTRIVLLRALAFVYFVAFLVAF). The Lumenal segment spans residues 66-120 (HQNKQLIGDRGLLPCRAYLQSVQRHFGGRVSWDALSYAPTILWLLDWSHMDANLD). Residues 121–144 (ALALLGLGISSFILVSGCANMVLM) form a helical membrane-spanning segment. Topologically, residues 145–200 (AALWVLYMSLVNVGQIWYSFGWESQLLETGFLGIFLCPLWTLSALPRGTPTSWVVM) are cytoplasmic. Residues 201–214 (WGFRWLIFRIMLGA) traverse the membrane as a helical segment. At 215-285 (GLIKIRGDRC…LGRRMCIVHG (71 aa)) the chain is on the lumenal side. A helical membrane pass occupies residues 286–314 (ALQVLFQVVLIISGNLSFLNWLTIVPSLA). Residues 315 to 360 (CFDDATLGGLFPSGPGRLKDQVLKIQEEETRGARAPRTRGSVARGT) are Cytoplasmic-facing. Residues 361–382 (VNLALGILVAWLSIPVVLNLLS) form a helical membrane-spanning segment. The Lumenal segment spans residues 383 to 561 (PRQVMNSSFN…SRQWPYPEPE (179 aa)).

This sequence belongs to the lipase maturation factor family. As to quaternary structure, interacts with LPL and SEL1L.

Its subcellular location is the endoplasmic reticulum membrane. In terms of biological role, involved in the maturation of specific proteins in the endoplasmic reticulum. Required for maturation and transport of active lipoprotein lipase (LPL) through the secretory pathway. Each LMF1 molecule chaperones 50 or more molecules of LPL. In Bos taurus (Bovine), this protein is Lipase maturation factor 1 (LMF1).